Here is a 998-residue protein sequence, read N- to C-terminus: Type II restriction enzyme and methyltransferase RM.Eco57I (998 aa).

This sequence in the C-terminal section; belongs to the N(4)/N(6)-methyltransferase family. Monomer.

The enzyme catalyses Endonucleolytic cleavage of DNA to give specific double-stranded fragments with terminal 5'-phosphates.. It catalyses the reaction a 2'-deoxyadenosine in DNA + S-adenosyl-L-methionine = an N(6)-methyl-2'-deoxyadenosine in DNA + S-adenosyl-L-homocysteine + H(+). With respect to regulation, mg(2+) is absolutely required for DNA restriction. Functionally, an E, G and S subtype restriction enzyme that recognizes the (non-palindromic) double-stranded sequence 5'-CTGAAG-3' and cleaves respectively 22 bases after C-1 and 14 bases before C'-1; cleavage of lambda DNA is never complete. Also acts as a methylase that causes specific methylation on A-5 in 5'-CTGAAG-3', the other strand is methylated by the M.Eco57I methylase. The protein is Type II restriction enzyme and methyltransferase RM.Eco57I of Escherichia coli.